Reading from the N-terminus, the 227-residue chain is Probable maleylacetoacetate isomerase 2 (227 aa).

The 84-residue stretch at 14-97 (IQPILYSYWR…YLEETRPQRP (84 aa)) folds into the GST N-terminal domain. Glutathione is bound by residues 24 to 29 (SSCSWR), Gln55, Val69, 81 to 82 (ES), Gln121, and 125 to 127 (NLI). The 121-residue stretch at 102 to 222 (DVHKRAKVRE…HPSNQPDCPP (121 aa)) folds into the GST C-terminal domain.

Belongs to the GST superfamily. Zeta family. Glutathione is required as a cofactor.

The protein localises to the cytoplasm. It carries out the reaction 4-maleylacetoacetate = 4-fumarylacetoacetate. The catalysed reaction is RX + glutathione = an S-substituted glutathione + a halide anion + H(+). Its pathway is amino-acid degradation; L-phenylalanine degradation; acetoacetate and fumarate from L-phenylalanine: step 5/6. Functionally, catalyzes the glutathione dependent oxygenation of dichloroacetic acid to glyoxylic acid in vitro. Has no glutathione thioltransferase activity with 4-hydroxynonenal (4-HNE), adrenochrome, phenethyl isothiocyanate (PEITC), 5-hydroperoxyeicosatetraenoic acid ((5S)-HpETE), prostaglandin A2 (PGA2) or 2-hydroxyethyldisulfide (HED). The polypeptide is Probable maleylacetoacetate isomerase 2 (GstZ2) (Drosophila melanogaster (Fruit fly)).